Consider the following 472-residue polypeptide: MAKCGSCGPGYKSPLDAMKGPREEIVYLPCIYRSTGINKPDYLATVDVDPKSPSYSQVIHRLPMPNVNDELHHSGWNTCSSCYGDSSKVRNKLILPCLISSRIYVVDVGSDPRAPRIHKTVEPYEVFWKCGLANPHTSHCLGCGEIMISSLGDPCGNGKGGFVLLDGETFEVKGNWEVEGESAQFGYDFWYQPRHNVMISTEWGAPKAFALGFKMEDVQAGHYGHSLNVWDWTEHRLVQTIDLGKDGLIPLEIRFLHNPDADQGLVGCALSSSIFRFYKEKDGKWAAEKVIQVPSKKVEGWPMPEMPGLITDILISLDDRFLYFSNWLHGDIRQYDITDTRNPKLVGQIFLGGSIQRGGPVTVLEDKELECQPDPVTVKGKIIPGGPQMIQLSLDGKRIYVTSSLYSIWDKQFYPDLLKEGAVMLQIDVDTKKGGLKLNPNFLVDFGKEPDGPVLAHEIRYPGGDCTSDIWI.

Belongs to the selenium-binding protein family.

Its subcellular location is the nucleus. The protein resides in the cytoplasm. The protein localises to the cytosol. It is found in the membrane. It catalyses the reaction methanethiol + O2 + H2O = hydrogen sulfide + formaldehyde + H2O2 + H(+). It functions in the pathway organosulfur degradation. Functionally, catalyzes the oxidation of methanethiol, an organosulfur compound known to be produced in substantial amounts by gut bacteria. Selenium-binding protein which may be involved in the sensing of reactive xenobiotics in the cytoplasm. May be involved in intra-Golgi protein transport. The protein is Methanethiol oxidase (selenbp1-a) of Xenopus laevis (African clawed frog).